We begin with the raw amino-acid sequence, 74 residues long: UPF0235 protein tsr1994 (74 aa).

The protein belongs to the UPF0235 family.

The sequence is that of UPF0235 protein tsr1994 from Thermosynechococcus vestitus (strain NIES-2133 / IAM M-273 / BP-1).